The sequence spans 29 residues: Toxin Bl-4 (29 aa).

This sequence belongs to the long (4 C-C) scorpion toxin superfamily. Sodium channel inhibitor family. Beta subfamily. Expressed by the venom gland.

The protein localises to the secreted. Excitatory insect beta-toxins induce a spastic paralysis. They bind voltage-independently at site-4 of sodium channels (Nav) and shift the voltage of activation toward more negative potentials thereby affecting sodium channel activation and promoting spontaneous and repetitive firing. The fraction to which this protein belongs exhibits low toxicity and induces transient paralysis in all insects tested (the crickets A.domesticus). This Buthacus leptochelys (Egyptian fat-tailed scorpion) protein is Toxin Bl-4.